Here is a 377-residue protein sequence, read N- to C-terminus: Phospho-N-acetylmuramoyl-pentapeptide-transferase (377 aa).

The next 10 helical transmembrane spans lie at 27-47 (TAFA…YVIE), 71-91 (GTPT…TLLW), 94-114 (LSDP…AIGF), 139-159 (ILAS…GSYS), 182-202 (VPHL…IVIV), 216-236 (GLAI…TYVS), 252-272 (MVGE…GFLW), 280-300 (IFMG…VAVV), 305-325 (LLLP…ILQV), and 354-374 (KVIV…LTTL).

Belongs to the glycosyltransferase 4 family. MraY subfamily. Mg(2+) is required as a cofactor.

Its subcellular location is the cell inner membrane. The enzyme catalyses UDP-N-acetyl-alpha-D-muramoyl-L-alanyl-gamma-D-glutamyl-meso-2,6-diaminopimeloyl-D-alanyl-D-alanine + di-trans,octa-cis-undecaprenyl phosphate = di-trans,octa-cis-undecaprenyl diphospho-N-acetyl-alpha-D-muramoyl-L-alanyl-D-glutamyl-meso-2,6-diaminopimeloyl-D-alanyl-D-alanine + UMP. Its pathway is cell wall biogenesis; peptidoglycan biosynthesis. Functionally, catalyzes the initial step of the lipid cycle reactions in the biosynthesis of the cell wall peptidoglycan: transfers peptidoglycan precursor phospho-MurNAc-pentapeptide from UDP-MurNAc-pentapeptide onto the lipid carrier undecaprenyl phosphate, yielding undecaprenyl-pyrophosphoryl-MurNAc-pentapeptide, known as lipid I. The polypeptide is Phospho-N-acetylmuramoyl-pentapeptide-transferase (Acidobacterium capsulatum (strain ATCC 51196 / DSM 11244 / BCRC 80197 / JCM 7670 / NBRC 15755 / NCIMB 13165 / 161)).